The primary structure comprises 444 residues: Multidrug resistance protein MdtA (444 aa).

Residues 1–20 form the signal peptide; sequence MKSQSKRTSRLFVFVGVVVA. Over residues 37–52 the composition is skewed to polar residues; it reads NNTSGAQQSARGQDTS. 2 disordered regions span residues 37-60 and 399-444; these read NNTSGAQQSARGQDTSHGGRRNTP and PRSA…AEKS. A compositionally biased stretch (low complexity) spans 409–419; sequence ASAEKAAAEAE. Over residues 435 to 444 the composition is skewed to polar residues; sequence ARSTTAAEKS.

The protein belongs to the membrane fusion protein (MFP) (TC 8.A.1) family. In terms of assembly, part of a tripartite efflux system composed of MdtA, MdtB and MdtC.

It localises to the cell inner membrane. The protein is Multidrug resistance protein MdtA of Yersinia pseudotuberculosis serotype I (strain IP32953).